The following is a 283-amino-acid chain: Diaminopimelate epimerase (283 aa).

3 residues coordinate substrate: asparagine 13, glutamine 45, and asparagine 65. The active-site Proton donor is cysteine 74. Substrate-binding positions include 75 to 76, asparagine 156, asparagine 190, and 208 to 209; these read GN and ER. Cysteine 217 (proton acceptor) is an active-site residue. 218-219 serves as a coordination point for substrate; the sequence is GS.

The protein belongs to the diaminopimelate epimerase family. As to quaternary structure, homodimer.

It is found in the cytoplasm. The catalysed reaction is (2S,6S)-2,6-diaminopimelate = meso-2,6-diaminopimelate. It participates in amino-acid biosynthesis; L-lysine biosynthesis via DAP pathway; DL-2,6-diaminopimelate from LL-2,6-diaminopimelate: step 1/1. Functionally, catalyzes the stereoinversion of LL-2,6-diaminopimelate (L,L-DAP) to meso-diaminopimelate (meso-DAP), a precursor of L-lysine and an essential component of the bacterial peptidoglycan. This chain is Diaminopimelate epimerase, found in Bartonella quintana (strain Toulouse) (Rochalimaea quintana).